Here is an 85-residue protein sequence, read N- to C-terminus: MAHKKGQGSTQNNRDSAGRRLGVKKFGGEFVRAGNIIIRQRGTKVHPGSNVGMGTDHTIFALIDGIVKFERKDKERKKVSIYPAS.

A disordered region spans residues Met-1–Leu-21.

Belongs to the bacterial ribosomal protein bL27 family.

This is Large ribosomal subunit protein bL27 from Wolinella succinogenes (strain ATCC 29543 / DSM 1740 / CCUG 13145 / JCM 31913 / LMG 7466 / NCTC 11488 / FDC 602W) (Vibrio succinogenes).